Consider the following 96-residue polypeptide: MTVDDKLIAKLEKLSSLQVDDERKEKLKSELADIINFVENLNDIDVSNIEATFSTIEGGTPLREDTSKQDLELSNHILNHAPKSEDGYFIVPKIIE.

The protein belongs to the GatC family. In terms of assembly, heterotrimer of A, B and C subunits.

It carries out the reaction L-glutamyl-tRNA(Gln) + L-glutamine + ATP + H2O = L-glutaminyl-tRNA(Gln) + L-glutamate + ADP + phosphate + H(+). It catalyses the reaction L-aspartyl-tRNA(Asn) + L-glutamine + ATP + H2O = L-asparaginyl-tRNA(Asn) + L-glutamate + ADP + phosphate + 2 H(+). Allows the formation of correctly charged Asn-tRNA(Asn) or Gln-tRNA(Gln) through the transamidation of misacylated Asp-tRNA(Asn) or Glu-tRNA(Gln) in organisms which lack either or both of asparaginyl-tRNA or glutaminyl-tRNA synthetases. The reaction takes place in the presence of glutamine and ATP through an activated phospho-Asp-tRNA(Asn) or phospho-Glu-tRNA(Gln). The polypeptide is Aspartyl/glutamyl-tRNA(Asn/Gln) amidotransferase subunit C (Aliarcobacter butzleri (strain RM4018) (Arcobacter butzleri)).